Consider the following 766-residue polypeptide: Protein translocase subunit SecA 2 (766 aa).

ATP-binding positions include glutamine 84, 102 to 106, and aspartate 490; that span reads GEGKT.

This sequence belongs to the SecA family. In terms of assembly, monomer and homodimer. Part of the essential Sec protein translocation apparatus which comprises SecA, SecYEG and auxiliary proteins SecDF. Other proteins may also be involved.

It is found in the cell membrane. It localises to the cytoplasm. The enzyme catalyses ATP + H2O + cellular proteinSide 1 = ADP + phosphate + cellular proteinSide 2.. In terms of biological role, part of the Sec protein translocase complex. Interacts with the SecYEG preprotein conducting channel. Has a central role in coupling the hydrolysis of ATP to the transfer of proteins into and across the cell membrane, serving as an ATP-driven molecular motor driving the stepwise translocation of polypeptide chains across the membrane. This Thermobifida fusca (strain YX) protein is Protein translocase subunit SecA 2.